The chain runs to 231 residues: Ribonuclease HII (231 aa).

Residues W33–A222 form the RNase H type-2 domain. Positions 39, 40, and 130 each coordinate a divalent metal cation.

The protein belongs to the RNase HII family. Mn(2+) serves as cofactor. Mg(2+) is required as a cofactor.

The protein resides in the cytoplasm. The enzyme catalyses Endonucleolytic cleavage to 5'-phosphomonoester.. In terms of biological role, endonuclease that specifically degrades the RNA of RNA-DNA hybrids. The polypeptide is Ribonuclease HII (Sinorhizobium fredii (strain NBRC 101917 / NGR234)).